The following is a 412-amino-acid chain: Branched-chain alpha-ketoacid dehydrogenase kinase (412 aa).

The N-terminal 30 residues, 1–30 (MILTSVLGSGPRSGSSLWPLLGSSLSLRVR), are a transit peptide targeting the mitochondrion. Serine 31 is subject to Phosphoserine. Positions 159 to 404 (LDDHKDVVTL…DVYLRLRHID (246 aa)) constitute a Histidine kinase domain. N6-acetyllysine occurs at positions 192 and 233. The ATP site is built by asparagine 279 and aspartate 315. Residue asparagine 279 coordinates Mg(2+). K(+)-binding residues include valine 328, aspartate 330, and phenylalanine 333. Residues threonine 334 and threonine 335 each coordinate ATP. Phosphoserine occurs at positions 356 and 360. Residues histidine 364, glycine 367, and leucine 370 each coordinate ATP. Glycine 367 is a K(+) binding site.

This sequence belongs to the PDK/BCKDK protein kinase family. As to quaternary structure, homodimer. Homotetramer. Dimerizes through interaction of two opposing nucleotide-binding domains. Interacts with E2 component of the branched-chain alpha-ketoacid dehydrogenase (BCKDH) complex. Competes with BCKDK for binding to the E2 component; this interaction is modulated by branched-chain alpha-keto acids. At steady state, BCKDH holoenzyme contains BCKDK and BCKDHA is phosphorylated. In response to high levels of branched-chain alpha-keto acids, the inhibitory BCKDK is replaced by activating PPM1K leading to BCKDHA dephosphorylation and BCAA degradation. Autophosphorylated. In terms of tissue distribution, expressed in heart and liver.

The protein resides in the mitochondrion matrix. Its subcellular location is the mitochondrion. The enzyme catalyses L-seryl-[3-methyl-2-oxobutanoate dehydrogenase] + ATP = O-phospho-L-seryl-[3-methyl-2-oxobutanoate dehydrogenase] + ADP + H(+). It catalyses the reaction L-seryl-[protein] + ATP = O-phospho-L-seryl-[protein] + ADP + H(+). The ATP-ase activity is up-regulated by potassium and rubidium ions but not by sodium ions. Up-regulated in the presence of apo- or lipoylated-DBT/E2b subunit of the BCKDH complex. Its function is as follows. Serine/threonine-protein kinase component of macronutrients metabolism. Forms a functional kinase and phosphatase pair with PPM1K, serving as a metabolic regulatory node that coordinates branched-chain amino acids (BCAAs) with glucose and lipid metabolism via two distinct phosphoprotein targets: mitochondrial BCKDHA subunit of the branched-chain alpha-ketoacid dehydrogenase (BCKDH) complex and cytosolic ACLY, a lipogenic enzyme of Krebs cycle. Phosphorylates and inactivates mitochondrial BCKDH complex a multisubunit complex consisting of three multimeric components each involved in different steps of BCAA catabolism: E1 composed of BCKDHA and BCKDHB, E2 core composed of DBT monomers, and E3 composed of DLD monomers. Associates with the E2 component of BCKDH complex and phosphorylates BCKDHA on Ser-333, leading to conformational changes that interrupt substrate channeling between E1 and E2 and inactivates the BCKDH complex. phosphorylates ACLY on Ser-455 in response to changes in cellular carbohydrate abundance such as occurs during fasting to feeding metabolic transition. Refeeding stimulates MLXIPL/ChREBP transcription factor, leading to increased BCKDK to PPM1K expression ratio, phosphorylation and activation of ACLY that ultimately results in the generation of malonyl-CoA and oxaloacetate immediate substrates of de novo lipogenesis and glucogenesis, respectively. Recognizes phosphosites having SxxE/D canonical motif. The chain is Branched-chain alpha-ketoacid dehydrogenase kinase (Bckdk) from Rattus norvegicus (Rat).